The following is a 194-amino-acid chain: Peptidyl-tRNA hydrolase (194 aa).

Tyr-17 is a binding site for tRNA. His-22 acts as the Proton acceptor in catalysis. Tyr-68, Asn-70, and Asn-116 together coordinate tRNA.

Belongs to the PTH family. In terms of assembly, monomer.

It is found in the cytoplasm. It carries out the reaction an N-acyl-L-alpha-aminoacyl-tRNA + H2O = an N-acyl-L-amino acid + a tRNA + H(+). Functionally, hydrolyzes ribosome-free peptidyl-tRNAs (with 1 or more amino acids incorporated), which drop off the ribosome during protein synthesis, or as a result of ribosome stalling. In terms of biological role, catalyzes the release of premature peptidyl moieties from peptidyl-tRNA molecules trapped in stalled 50S ribosomal subunits, and thus maintains levels of free tRNAs and 50S ribosomes. The protein is Peptidyl-tRNA hydrolase of Chromohalobacter salexigens (strain ATCC BAA-138 / DSM 3043 / CIP 106854 / NCIMB 13768 / 1H11).